Here is a 293-residue protein sequence, read N- to C-terminus: tRNA pseudouridine synthase B (293 aa).

The active-site Nucleophile is aspartate 40.

It belongs to the pseudouridine synthase TruB family. Type 1 subfamily.

It catalyses the reaction uridine(55) in tRNA = pseudouridine(55) in tRNA. Functionally, responsible for synthesis of pseudouridine from uracil-55 in the psi GC loop of transfer RNAs. This chain is tRNA pseudouridine synthase B, found in Rickettsia akari (strain Hartford).